The chain runs to 218 residues: Imidazole glycerol phosphate synthase subunit HisH (218 aa).

One can recognise a Glutamine amidotransferase type-1 domain in the interval 5–213; sequence RLAVIDYEAG…VEFVARCSPL (209 aa). Cys83 (nucleophile) is an active-site residue. Residues His188 and Glu190 contribute to the active site.

In terms of assembly, heterodimer of HisH and HisF.

It is found in the cytoplasm. The catalysed reaction is 5-[(5-phospho-1-deoxy-D-ribulos-1-ylimino)methylamino]-1-(5-phospho-beta-D-ribosyl)imidazole-4-carboxamide + L-glutamine = D-erythro-1-(imidazol-4-yl)glycerol 3-phosphate + 5-amino-1-(5-phospho-beta-D-ribosyl)imidazole-4-carboxamide + L-glutamate + H(+). It carries out the reaction L-glutamine + H2O = L-glutamate + NH4(+). It functions in the pathway amino-acid biosynthesis; L-histidine biosynthesis; L-histidine from 5-phospho-alpha-D-ribose 1-diphosphate: step 5/9. IGPS catalyzes the conversion of PRFAR and glutamine to IGP, AICAR and glutamate. The HisH subunit catalyzes the hydrolysis of glutamine to glutamate and ammonia as part of the synthesis of IGP and AICAR. The resulting ammonia molecule is channeled to the active site of HisF. This Synechococcus sp. (strain JA-2-3B'a(2-13)) (Cyanobacteria bacterium Yellowstone B-Prime) protein is Imidazole glycerol phosphate synthase subunit HisH.